The primary structure comprises 625 residues: DNA mismatch repair protein MutL (625 aa).

This sequence belongs to the DNA mismatch repair MutL/HexB family.

In terms of biological role, this protein is involved in the repair of mismatches in DNA. It is required for dam-dependent methyl-directed DNA mismatch repair. May act as a 'molecular matchmaker', a protein that promotes the formation of a stable complex between two or more DNA-binding proteins in an ATP-dependent manner without itself being part of a final effector complex. This chain is DNA mismatch repair protein MutL, found in Azorhizobium caulinodans (strain ATCC 43989 / DSM 5975 / JCM 20966 / LMG 6465 / NBRC 14845 / NCIMB 13405 / ORS 571).